A 90-amino-acid polypeptide reads, in one-letter code: N(2)-fixation sustaining protein CowN (90 aa).

Belongs to the CowN family.

Functionally, is required to sustain N(2)-dependent growth in the presence of low levels of carbon monoxide (CO). Probably acts by protecting the N(2) fixation ability of the nitrogenase complex, which is inactivated in the presence of CO. The sequence is that of N(2)-fixation sustaining protein CowN from Halorhodospira halophila (strain DSM 244 / SL1) (Ectothiorhodospira halophila (strain DSM 244 / SL1)).